The primary structure comprises 326 residues: Transcription factor bHLH143 (326 aa).

A compositionally biased stretch (acidic residues) spans 175–189 (SDDDDNDDWESDDEV). Disordered stretches follow at residues 175–194 (SDDD…STGH) and 234–275 (RDSS…EQSR). A compositionally biased stretch (polar residues) spans 255–271 (PESNISSKQETGSGLSD). The bHLH domain occupies 263–312 (QETGSGLSDEQSRKDKIHTALRILESVVPGAKGKEALLLLDEAIDYLKLL).

In terms of assembly, homodimer.

The protein resides in the nucleus. The polypeptide is Transcription factor bHLH143 (BHLH143) (Arabidopsis thaliana (Mouse-ear cress)).